An 85-amino-acid chain; its full sequence is MSLLSMLFGNKPKTAHLAKERLQLIIAHERDGGGSSANFLPDLQRELIAVISKYVKVNTEDIRVSLEKQGNYEVLEVNIVLPEKG.

This sequence belongs to the MinE family.

Functionally, prevents the cell division inhibition by proteins MinC and MinD at internal division sites while permitting inhibition at polar sites. This ensures cell division at the proper site by restricting the formation of a division septum at the midpoint of the long axis of the cell. This chain is Cell division topological specificity factor, found in Dechloromonas aromatica (strain RCB).